The sequence spans 419 residues: Serine/threonine-protein kinase Kist (419 aa).

The Protein kinase domain maps to 23 to 303 (WQVQSRLGSG…PAEMALCSPF (281 aa)). ATP-binding positions include 29–37 (LGSGSSASV) and Lys-54. Catalysis depends on Asp-158, which acts as the Proton acceptor. The region spanning 323–405 (LRLLNVLDDD…GKFVVATFYP (83 aa)) is the RRM domain.

This sequence belongs to the protein kinase superfamily. Ser/Thr protein kinase family. Interacts with PAM and CDKN1B/p27Kip1. Interacts with stathmin.

Its subcellular location is the nucleus. The enzyme catalyses L-seryl-[protein] + ATP = O-phospho-L-seryl-[protein] + ADP + H(+). The catalysed reaction is L-threonyl-[protein] + ATP = O-phospho-L-threonyl-[protein] + ADP + H(+). Its function is as follows. Upon serum stimulation, phosphorylates CDKN1B/p27Kip1, thus controlling CDKN1B subcellular location and cell cycle progression in G1 phase. May be involved in trafficking and/or processing of RNA. The sequence is that of Serine/threonine-protein kinase Kist (Uhmk1) from Mus musculus (Mouse).